Here is a 195-residue protein sequence, read N- to C-terminus: Endoribonuclease YbeY (195 aa).

The Zn(2+) site is built by H152, H156, and H162.

Belongs to the endoribonuclease YbeY family. The cofactor is Zn(2+).

It localises to the cytoplasm. Its function is as follows. Single strand-specific metallo-endoribonuclease involved in late-stage 70S ribosome quality control and in maturation of the 3' terminus of the 16S rRNA. The protein is Endoribonuclease YbeY of Rhodopseudomonas palustris (strain BisB5).